The chain runs to 316 residues: Phosphatidylglycerol--prolipoprotein diacylglyceryl transferase (316 aa).

3 helical membrane passes run 18-38 (PIPI…AIWL), 47-67 (GGNP…GIIG), and 95-115 (NGGL…AVFF). Arg-141 is an a 1,2-diacyl-sn-glycero-3-phospho-(1'-sn-glycerol) binding site. 2 consecutive transmembrane segments (helical) span residues 188–208 (VHPT…LLMW) and 251–271 (INTI…FLLK). The interval 292–316 (AVASPDGKPLPKAGEGIDGETPSTR) is disordered.

Belongs to the Lgt family.

Its subcellular location is the cell membrane. The catalysed reaction is L-cysteinyl-[prolipoprotein] + a 1,2-diacyl-sn-glycero-3-phospho-(1'-sn-glycerol) = an S-1,2-diacyl-sn-glyceryl-L-cysteinyl-[prolipoprotein] + sn-glycerol 1-phosphate + H(+). Its pathway is protein modification; lipoprotein biosynthesis (diacylglyceryl transfer). Catalyzes the transfer of the diacylglyceryl group from phosphatidylglycerol to the sulfhydryl group of the N-terminal cysteine of a prolipoprotein, the first step in the formation of mature lipoproteins. This Corynebacterium glutamicum (strain ATCC 13032 / DSM 20300 / JCM 1318 / BCRC 11384 / CCUG 27702 / LMG 3730 / NBRC 12168 / NCIMB 10025 / NRRL B-2784 / 534) protein is Phosphatidylglycerol--prolipoprotein diacylglyceryl transferase.